Consider the following 416-residue polypeptide: MSLSNKLSVKDLDVAGKRVFIRVDFNVPLDGDKITNNQRIVAALPTIQYVLDHKPKVVVLASHLGRPNGEVNPKFSLKPVAAELSSLLGKKVTFLNDSVGPEVEKAVNSASNGEVILLENLRFHIEEEGSQKKDGQKIKADKEAVARFRKQLTALADVYVNDAFGTAHRAHSSMVGFELEQRAAGFLMAKELTYFAKALENPVRPFLAILGGAKVSDKIQLIDNLLDKVDSIIIGGGMAFTFIKVLDNVAIGNSLFDEAGAKLVPGLVEKAKKNNVKLVLPVDFVTADAFSKDAKVGEATVESGIPDGLQGLDAGPKSRELFAATIAEAKTIVWNGPPGVFEFDKFAEGTKSMLAAAIKNAQNGGTVIVGGGDTATVAKKFGGADKLSHVSTGGGASLELLEGKELPGVVYLSKKA.

(2R)-3-phosphoglycerate contacts are provided by V23, D24, F25, N26, Q38, R39, S62, H63, G65, R66, L121, R122, H168, and R169. Residue G212 coordinates ADP. Residue G212 coordinates CDP. Residues A213 and K214 each contribute to the AMP site. A213 provides a ligand contact to ATP. A213 is a Mg(2+) binding site. D217 contacts CDP. Residue D217 participates in Mg(2+) binding. Residue K218 participates in AMP binding. K218 contacts ATP. Residue G236 coordinates ADP. G236 provides a ligand contact to CDP. Residues G237 and G311 each contribute to the AMP site. ATP contacts are provided by G237 and G311. Residues G336 and F341 each coordinate CDP. ADP is bound at residue F341. An AMP-binding site is contributed by E342. The ATP site is built by E342, D373, and T374. A Mg(2+)-binding site is contributed by D373.

Belongs to the phosphoglycerate kinase family. Monomer. It depends on Mg(2+) as a cofactor.

It localises to the cytoplasm. The protein resides in the mitochondrion. The catalysed reaction is (2R)-3-phosphoglycerate + ATP = (2R)-3-phospho-glyceroyl phosphate + ADP. It participates in carbohydrate degradation; glycolysis; pyruvate from D-glyceraldehyde 3-phosphate: step 2/5. Its function is as follows. Catalyzes one of the two ATP producing reactions in the glycolytic pathway via the reversible conversion of 1,3-diphosphoglycerate to 3-phosphoglycerate. Both L- and D- forms of purine and pyrimidine nucleotides can be used as substrates, but the activity is much lower on pyrimidines. Negatively regulates the biosynthesis of acetyl-CoA from pyruvate in the mitochondrion. In Komagataella pastoris (Yeast), this protein is Phosphoglycerate kinase (PGK1).